A 284-amino-acid chain; its full sequence is Signal peptidase I (284 aa).

A helical membrane pass occupies residues 4–22 (NFPLLLVIAVAVCGALALV). At 23–58 (DLVLFAPRRRAAISSYEGQVNEPDPAVLEKLNKEPL) the chain is on the cytoplasmic side. The chain crosses the membrane as a helical span at residues 59-77 (LVEYGKSFFPVLFIVLVLR). The Periplasmic segment spans residues 78-284 (SFLVEPFQIP…PNFSRVGVIH (207 aa)). Residues Ser-90 and Lys-145 contribute to the active site.

This sequence belongs to the peptidase S26 family.

Its subcellular location is the cell inner membrane. The enzyme catalyses Cleavage of hydrophobic, N-terminal signal or leader sequences from secreted and periplasmic proteins.. In Pseudomonas aeruginosa (strain ATCC 15692 / DSM 22644 / CIP 104116 / JCM 14847 / LMG 12228 / 1C / PRS 101 / PAO1), this protein is Signal peptidase I (lepB).